Consider the following 294-residue polypeptide: Elongation factor Ts (294 aa).

The involved in Mg(2+) ion dislocation from EF-Tu stretch occupies residues 81–84; that stretch reads TDFV.

This sequence belongs to the EF-Ts family.

The protein resides in the cytoplasm. Functionally, associates with the EF-Tu.GDP complex and induces the exchange of GDP to GTP. It remains bound to the aminoacyl-tRNA.EF-Tu.GTP complex up to the GTP hydrolysis stage on the ribosome. This is Elongation factor Ts (tsf) from Mycoplasmopsis pulmonis (strain UAB CTIP) (Mycoplasma pulmonis).